The following is a 491-amino-acid chain: ADP-specific phosphofructokinase (491 aa).

Residues 4–486 (EEWEQRHAEA…FVAMLAKIKQ (483 aa)) enclose the ADPK domain. The Mg(2+) site is built by glutamate 281, glutamate 312, and aspartate 470. Aspartate 470 functions as the Proton acceptor in the catalytic mechanism.

Belongs to the carbohydrate kinase PfkC family. It depends on Mg(2+) as a cofactor.

It localises to the cytoplasm. The enzyme catalyses beta-D-fructose 6-phosphate + ADP = beta-D-fructose 1,6-bisphosphate + AMP + H(+). It functions in the pathway carbohydrate degradation; glycolysis. In terms of biological role, catalyzes the phosphorylation of fructose 6-phosphate to fructose 1,6-bisphosphate using ADP as the phosphate donor. In Methanosarcina acetivorans (strain ATCC 35395 / DSM 2834 / JCM 12185 / C2A), this protein is ADP-specific phosphofructokinase.